The following is a 77-amino-acid chain: Acyl carrier protein (77 aa).

In terms of domain architecture, Carrier spans 2–77 (SSIEERVNKI…SAVDYIKAHS (76 aa)). O-(pantetheine 4'-phosphoryl)serine is present on Ser-37.

The protein belongs to the acyl carrier protein (ACP) family. 4'-phosphopantetheine is transferred from CoA to a specific serine of apo-ACP by AcpS. This modification is essential for activity because fatty acids are bound in thioester linkage to the sulfhydryl of the prosthetic group.

It localises to the cytoplasm. The protein operates within lipid metabolism; fatty acid biosynthesis. Its function is as follows. Carrier of the growing fatty acid chain in fatty acid biosynthesis. The polypeptide is Acyl carrier protein (Alcanivorax borkumensis (strain ATCC 700651 / DSM 11573 / NCIMB 13689 / SK2)).